The sequence spans 282 residues: Bis(5'-nucleosyl)-tetraphosphatase, symmetrical (282 aa).

It belongs to the Ap4A hydrolase family.

It catalyses the reaction P(1),P(4)-bis(5'-adenosyl) tetraphosphate + H2O = 2 ADP + 2 H(+). In terms of biological role, hydrolyzes diadenosine 5',5'''-P1,P4-tetraphosphate to yield ADP. The chain is Bis(5'-nucleosyl)-tetraphosphatase, symmetrical from Shigella dysenteriae serotype 1 (strain Sd197).